A 436-amino-acid polypeptide reads, in one-letter code: UDP-N-acetylmuramoylalanine--D-glutamate ligase (436 aa).

112-118 (GSNGKST) contacts ATP.

It belongs to the MurCDEF family.

The protein localises to the cytoplasm. The enzyme catalyses UDP-N-acetyl-alpha-D-muramoyl-L-alanine + D-glutamate + ATP = UDP-N-acetyl-alpha-D-muramoyl-L-alanyl-D-glutamate + ADP + phosphate + H(+). It functions in the pathway cell wall biogenesis; peptidoglycan biosynthesis. Cell wall formation. Catalyzes the addition of glutamate to the nucleotide precursor UDP-N-acetylmuramoyl-L-alanine (UMA). This is UDP-N-acetylmuramoylalanine--D-glutamate ligase from Photorhabdus laumondii subsp. laumondii (strain DSM 15139 / CIP 105565 / TT01) (Photorhabdus luminescens subsp. laumondii).